A 176-amino-acid chain; its full sequence is Peptide methionine sulfoxide reductase MsrA (176 aa).

The active site involves Cys10.

It belongs to the MsrA Met sulfoxide reductase family.

The catalysed reaction is L-methionyl-[protein] + [thioredoxin]-disulfide + H2O = L-methionyl-(S)-S-oxide-[protein] + [thioredoxin]-dithiol. It catalyses the reaction [thioredoxin]-disulfide + L-methionine + H2O = L-methionine (S)-S-oxide + [thioredoxin]-dithiol. Its function is as follows. Has an important function as a repair enzyme for proteins that have been inactivated by oxidation. Catalyzes the reversible oxidation-reduction of methionine sulfoxide in proteins to methionine. This chain is Peptide methionine sulfoxide reductase MsrA, found in Leptospira borgpetersenii serovar Hardjo-bovis (strain JB197).